Here is a 205-residue protein sequence, read N- to C-terminus: Lymphotoxin-alpha (205 aa).

A signal peptide spans 1 to 34; that stretch reads MTPPERLFLSRVRGTPLHLLLLGLLLVLLPGAQG. Thr-41 is a glycosylation site (O-linked (GalNAc...) threonine). In terms of domain architecture, THD spans 63–205; it reads PAAHLIGDPS…STVFFGAFAL (143 aa). Asn-96 is a glycosylation site (N-linked (GlcNAc...) asparagine).

The protein belongs to the tumor necrosis factor family. As to quaternary structure, homotrimer, and heterotrimer of either two LTB and one LTA subunits or (less prevalent) two LTA and one LTB subunits. Interacts with TNFRSF14.

The protein resides in the secreted. It localises to the membrane. Its function is as follows. Cytokine that in its homotrimeric form binds to TNFRSF1A/TNFR1, TNFRSF1B/TNFBR and TNFRSF14/HVEM. In its heterotrimeric form with LTB binds to TNFRSF3/LTBR. Lymphotoxin is produced by lymphocytes and is cytotoxic for a wide range of tumor cells in vitro and in vivo. This Macaca mulatta (Rhesus macaque) protein is Lymphotoxin-alpha (LTA).